Consider the following 1035-residue polypeptide: DNA polymerase catalytic subunit (1035 aa).

This sequence belongs to the DNA polymerase type-B family.

It is found in the host nucleus. The enzyme catalyses DNA(n) + a 2'-deoxyribonucleoside 5'-triphosphate = DNA(n+1) + diphosphate. This Macaca mulatta (Rhesus macaque) protein is DNA polymerase catalytic subunit (UL54).